The chain runs to 181 residues: Acireductone dioxygenase (181 aa).

4 residues coordinate Fe(2+): His98, His100, Glu104, and His142. Residues His98, His100, Glu104, and His142 each coordinate Ni(2+).

This sequence belongs to the acireductone dioxygenase (ARD) family. In terms of assembly, monomer. It depends on Fe(2+) as a cofactor. Ni(2+) is required as a cofactor.

It catalyses the reaction 1,2-dihydroxy-5-(methylsulfanyl)pent-1-en-3-one + O2 = 3-(methylsulfanyl)propanoate + CO + formate + 2 H(+). It carries out the reaction 1,2-dihydroxy-5-(methylsulfanyl)pent-1-en-3-one + O2 = 4-methylsulfanyl-2-oxobutanoate + formate + 2 H(+). The protein operates within amino-acid biosynthesis; L-methionine biosynthesis via salvage pathway; L-methionine from S-methyl-5-thio-alpha-D-ribose 1-phosphate: step 5/6. Its function is as follows. Catalyzes 2 different reactions between oxygen and the acireductone 1,2-dihydroxy-3-keto-5-methylthiopentene (DHK-MTPene) depending upon the metal bound in the active site. Fe-containing acireductone dioxygenase (Fe-ARD) produces formate and 2-keto-4-methylthiobutyrate (KMTB), the alpha-ketoacid precursor of methionine in the methionine recycle pathway. Ni-containing acireductone dioxygenase (Ni-ARD) produces methylthiopropionate, carbon monoxide and formate, and does not lie on the methionine recycle pathway. This is Acireductone dioxygenase from Synechococcus sp. (strain ATCC 27144 / PCC 6301 / SAUG 1402/1) (Anacystis nidulans).